A 504-amino-acid chain; its full sequence is Chromosomal replication initiator protein DnaA (504 aa).

The segment at 1-109 is domain I, interacts with DnaA modulators; the sequence is MTADPDPPFV…PTDEPEDAPD (109 aa). A disordered region spans residues 98 to 162; the sequence is ATPTDEPEDA…PDTSSDDSNA (65 aa). Positions 109–125 are enriched in low complexity; sequence DSFADSPAPASVPAGPA. The tract at residues 110 to 163 is domain II; sequence SFADSPAPASVPAGPADADEIDDDRDARVNAQESWPKYFSRPEPDTSSDDSNAV. The tract at residues 164-380 is domain III, AAA+ region; it reads NLNRRYTFDT…GALIRVTAFA (217 aa). Residues Gly208, Gly210, Lys211, and Thr212 each contribute to the ATP site. A domain IV, binds dsDNA region spans residues 381–504; sequence SLNKTRIDRS…TTRIRQRAKR (124 aa).

It belongs to the DnaA family. As to quaternary structure, oligomerizes as a right-handed, spiral filament on DNA at oriC.

Its subcellular location is the cytoplasm. Plays an essential role in the initiation and regulation of chromosomal replication. ATP-DnaA binds to the origin of replication (oriC) to initiate formation of the DNA replication initiation complex once per cell cycle. Binds the DnaA box (a 9 base pair repeat at the origin) and separates the double-stranded (ds)DNA. Forms a right-handed helical filament on oriC DNA; dsDNA binds to the exterior of the filament while single-stranded (ss)DNA is stabiized in the filament's interior. The ATP-DnaA-oriC complex binds and stabilizes one strand of the AT-rich DNA unwinding element (DUE), permitting loading of DNA polymerase. After initiation quickly degrades to an ADP-DnaA complex that is not apt for DNA replication. Binds acidic phospholipids. Its function is as follows. The probable consensus sequence for the DnaA box of this bacterium is 5'-TT(G/C)TCCACA-3'. The protein is Chromosomal replication initiator protein DnaA of Mycolicibacterium smegmatis (strain ATCC 700084 / mc(2)155) (Mycobacterium smegmatis).